We begin with the raw amino-acid sequence, 512 residues long: Glutathione-binding protein GsiB (512 aa).

Positions 1–26 (MTQFITHKWLAALGLASSIAAFPALA) are cleaved as a signal peptide.

The protein belongs to the bacterial solute-binding protein 5 family. In terms of assembly, the complex is composed of two ATP-binding proteins (GsiA), two transmembrane proteins (GsiC and GsiD) and a solute-binding protein (GsiB).

The protein resides in the periplasm. In terms of biological role, part of the ABC transporter complex GsiABCD involved in glutathione import. Binds glutathione. The chain is Glutathione-binding protein GsiB from Salmonella typhi.